The primary structure comprises 729 residues: Glutamine synthetase (729 aa).

The region spanning 85 to 174 (THYTHWFQPL…IPTIFISYTG (90 aa)) is the GS beta-grasp domain. A GS catalytic domain is found at 179–615 (YKTPLLKALA…VLGDLAINHI (437 aa)). Mg(2+) contacts are provided by Glu215, Glu217, Glu286, and Glu293. L-glutamate-binding positions include 337–338 (NG) and Gly338. His342 provides a ligand contact to Mg(2+). Residues Ser346 and Arg458 each coordinate ATP. Arg458 lines the L-glutamate pocket.

It belongs to the glutamine synthetase family. Homohexamer. It depends on Mg(2+) as a cofactor.

It is found in the cytoplasm. It carries out the reaction L-glutamate + NH4(+) + ATP = L-glutamine + ADP + phosphate + H(+). With respect to regulation, inhibited by L-histidine (46%), L-arginine (38%) and L-methionine-DL-sulphoximine. The activity of this enzyme is not controlled by adenylation. Its function is as follows. Catalyzes the ATP-dependent biosynthesis of glutamine from glutamate and ammonia. The chain is Glutamine synthetase from Bacteroides fragilis (strain YCH46).